Reading from the N-terminus, the 418-residue chain is Tyrosine--tRNA ligase (418 aa).

Position 35 (Tyr-35) interacts with L-tyrosine. The 'HIGH' region signature appears at 40-49 (PTAKSLHIGH). 2 residues coordinate L-tyrosine: Tyr-168 and Gln-172. Positions 228–232 (KYGKT) match the 'KMSKS' region motif. Lys-231 serves as a coordination point for ATP. Residues 352-410 (PTVVGAMVAAGVVDTKSGGRRAVAEGGAYLNNVKVADPDQRLTDDDFLCGRVALVRRGK) form the S4 RNA-binding domain.

The protein belongs to the class-I aminoacyl-tRNA synthetase family. TyrS type 1 subfamily. Homodimer.

It is found in the cytoplasm. It catalyses the reaction tRNA(Tyr) + L-tyrosine + ATP = L-tyrosyl-tRNA(Tyr) + AMP + diphosphate + H(+). In terms of biological role, catalyzes the attachment of tyrosine to tRNA(Tyr) in a two-step reaction: tyrosine is first activated by ATP to form Tyr-AMP and then transferred to the acceptor end of tRNA(Tyr). The sequence is that of Tyrosine--tRNA ligase from Cutibacterium acnes (strain DSM 16379 / KPA171202) (Propionibacterium acnes).